Consider the following 141-residue polypeptide: ATP synthase epsilon chain (141 aa).

Belongs to the ATPase epsilon chain family. F-type ATPases have 2 components, CF(1) - the catalytic core - and CF(0) - the membrane proton channel. CF(1) has five subunits: alpha(3), beta(3), gamma(1), delta(1), epsilon(1). CF(0) has three main subunits: a, b and c.

The protein resides in the cell inner membrane. In terms of biological role, produces ATP from ADP in the presence of a proton gradient across the membrane. This chain is ATP synthase epsilon chain, found in Methylobacillus flagellatus (strain ATCC 51484 / DSM 6875 / VKM B-1610 / KT).